A 31-amino-acid polypeptide reads, in one-letter code: Cytochrome b6-f complex subunit 6 (31 aa).

The chain crosses the membrane as a helical span at residues 4-26; it reads LTSYFGFLLAASTITPALFIGLN.

The protein belongs to the PetL family. The 4 large subunits of the cytochrome b6-f complex are cytochrome b6, subunit IV (17 kDa polypeptide, PetD), cytochrome f and the Rieske protein, while the 4 small subunits are PetG, PetL, PetM and PetN. The complex functions as a dimer.

Its subcellular location is the plastid. It is found in the chloroplast thylakoid membrane. Functionally, component of the cytochrome b6-f complex, which mediates electron transfer between photosystem II (PSII) and photosystem I (PSI), cyclic electron flow around PSI, and state transitions. PetL is important for photoautotrophic growth as well as for electron transfer efficiency and stability of the cytochrome b6-f complex. This is Cytochrome b6-f complex subunit 6 from Phalaenopsis aphrodite subsp. formosana (Moth orchid).